The chain runs to 66 residues: KEGYLVNHSTGCKYECFKLGDNDYCLRECRQQYGKGAGGYCYAFGCWCTHLYEQAVVWPLPKKTCN.

Residues 1-66 (KEGYLVNHST…VWPLPKKTCN (66 aa)) form the LCN-type CS-alpha/beta domain. Intrachain disulfides connect cysteine 12/cysteine 65, cysteine 16/cysteine 41, cysteine 25/cysteine 46, and cysteine 29/cysteine 48. Position 66 is an asparagine amide (asparagine 66).

In terms of tissue distribution, expressed by the venom gland.

It localises to the secreted. Functionally, beta toxins bind voltage independently at site-4 of sodium channels (Nav) and shift the activation voltage toward more negative potentials, thereby affecting sodium channel activation CC and promoting spontaneous and repetitive firing. This is Beta-toxin ChFII.7 from Centruroides hirsutipalpus (Scorpion).